A 421-amino-acid polypeptide reads, in one-letter code: UDP-N-acetylglucosamine 1-carboxyvinyltransferase (421 aa).

22-23 serves as a coordination point for phosphoenolpyruvate; sequence KN. Arginine 93 provides a ligand contact to UDP-N-acetyl-alpha-D-glucosamine. Catalysis depends on cysteine 117, which acts as the Proton donor. At cysteine 117 the chain carries 2-(S-cysteinyl)pyruvic acid O-phosphothioketal. Residues 122-126, aspartate 308, and isoleucine 330 each bind UDP-N-acetyl-alpha-D-glucosamine; that span reads RPVDL.

It belongs to the EPSP synthase family. MurA subfamily.

The protein localises to the cytoplasm. The catalysed reaction is phosphoenolpyruvate + UDP-N-acetyl-alpha-D-glucosamine = UDP-N-acetyl-3-O-(1-carboxyvinyl)-alpha-D-glucosamine + phosphate. The protein operates within cell wall biogenesis; peptidoglycan biosynthesis. Its function is as follows. Cell wall formation. Adds enolpyruvyl to UDP-N-acetylglucosamine. The polypeptide is UDP-N-acetylglucosamine 1-carboxyvinyltransferase (Pseudomonas putida (strain GB-1)).